A 130-amino-acid polypeptide reads, in one-letter code: General stress protein 13 (130 aa).

The S1 motif domain occupies 8–77 (GSVYTGKVTG…EKGKISLSIR (70 aa)). The interval 76 to 109 (IRATQAAPEKKESKPRKPKAAQVSEEASTPQGFN) is disordered. Over residues 100–109 (EEASTPQGFN) the composition is skewed to polar residues.

As to quaternary structure, found in association with the 30S subunit of the ribosome.

The protein localises to the cytoplasm. The chain is General stress protein 13 (yugI) from Bacillus subtilis (strain 168).